Reading from the N-terminus, the 348-residue chain is 2-methyl-6-phytyl-1,4-hydroquinone methyltransferase 2, chloroplastic (348 aa).

Residues 1–48 (MAMASSAYAPAGGVGTHSAPGRIRPPRGLGFSTTTTKSRPLVLTRRGG) are disordered. Residues 1-59 (MAMASSAYAPAGGVGTHSAPGRIRPPRGLGFSTTTTKSRPLVLTRRGGGGGNISVARLR) constitute a chloroplast transit peptide. Over 60 to 317 (CAASSSSAAA…PVNPITFLFR (258 aa)) the chain is Chloroplast intermembrane. An SAM motif I region spans residues 125 to 134 (VVDVGGGTGF). Positions 170-183 (VTIMEGDAEDLPFP) are SAM motif II. Positions 211–224 (RVLRLGGVACMIGP) are SAM motif III. Residues 318–338 (FLMGTICAAYYVLVPIYMWIK) form a helical membrane-spanning segment. Topologically, residues 339–348 (DQIVPKGMPI) are stromal.

This sequence belongs to the class I-like SAM-binding methyltransferase superfamily. MPBQ/MBSQ MT family.

The protein resides in the plastid. Its subcellular location is the chloroplast inner membrane. The enzyme catalyses 2-methyl-6-phytyl-1,4-benzene-1,4-diol + S-adenosyl-L-methionine = 2,3-dimethyl-6-phytylbenzene-1,4-diol + S-adenosyl-L-homocysteine + H(+). It carries out the reaction 2-methyl-6-(all-trans-nonaprenyl)benzene-1,4-diol + S-adenosyl-L-methionine = plastoquinol-9 + S-adenosyl-L-homocysteine + H(+). It catalyses the reaction 6-geranylgeranyl-2-methylbenzene-1,4-diol + S-adenosyl-L-methionine = 6-geranylgeranyl-2,3-dimethylbenzene-1,4-diol + S-adenosyl-L-homocysteine + H(+). It functions in the pathway cofactor biosynthesis; tocopherol biosynthesis. Functionally, involved in a key methylation step in both tocopherols (vitamin E) and plastoquinone synthesis. Catalyzes the conversion of 2-methyl-6-phytyl-1,4-hydroquinone (MPBQ) to 2,3-dimethyl-6-phytyl-1,4-hydroquinone (DMPQ, a substrate for tocopherol cyclase), and 2-methyl-6-solanyl-1,4-benzoquinone (MSBQ) to plastoquinone. The sequence is that of 2-methyl-6-phytyl-1,4-hydroquinone methyltransferase 2, chloroplastic from Oryza sativa subsp. japonica (Rice).